We begin with the raw amino-acid sequence, 1364 residues long: Trifunctional purine biosynthetic protein adenosine-3 (1364 aa).

Residues 114–321 (KDFMLRHGIP…LFEVMQACCS (208 aa)) enclose the ATP-grasp domain. 140–202 (IRSAPYQALV…EELLEGEEIS (63 aa)) is an ATP binding site. Mn(2+)-binding residues include Glu291 and Asn293. The segment at 435–1154 (AIATAPGLSY…ARTQRMLSQP (720 aa)) is AIRS. Residues 1155–1364 (RKRVAVLISG…EAPKDIKDSQ (210 aa)) are GART. 1166-1168 (GSN) lines the N(1)-(5-phospho-beta-D-ribosyl)glycinamide pocket. Residues Arg1221, 1246–1249 (MRIL), and Asn1263 each bind (6R)-10-formyltetrahydrofolate. His1265 acts as the Proton donor in catalysis. 1297–1301 (DEGVD) contacts (6R)-10-formyltetrahydrofolate. 1327–1330 (HYAE) serves as a coordination point for N(1)-(5-phospho-beta-D-ribosyl)glycinamide.

It in the N-terminal section; belongs to the GARS family. This sequence in the central section; belongs to the AIR synthase family. The protein in the C-terminal section; belongs to the GART family.

It catalyses the reaction 5-phospho-beta-D-ribosylamine + glycine + ATP = N(1)-(5-phospho-beta-D-ribosyl)glycinamide + ADP + phosphate + H(+). The catalysed reaction is 2-formamido-N(1)-(5-O-phospho-beta-D-ribosyl)acetamidine + ATP = 5-amino-1-(5-phospho-beta-D-ribosyl)imidazole + ADP + phosphate + H(+). It carries out the reaction N(1)-(5-phospho-beta-D-ribosyl)glycinamide + (6R)-10-formyltetrahydrofolate = N(2)-formyl-N(1)-(5-phospho-beta-D-ribosyl)glycinamide + (6S)-5,6,7,8-tetrahydrofolate + H(+). It functions in the pathway purine metabolism; IMP biosynthesis via de novo pathway; 5-amino-1-(5-phospho-D-ribosyl)imidazole from N(2)-formyl-N(1)-(5-phospho-D-ribosyl)glycinamide: step 2/2. Its pathway is purine metabolism; IMP biosynthesis via de novo pathway; N(1)-(5-phospho-D-ribosyl)glycinamide from 5-phospho-alpha-D-ribose 1-diphosphate: step 2/2. It participates in purine metabolism; IMP biosynthesis via de novo pathway; N(2)-formyl-N(1)-(5-phospho-D-ribosyl)glycinamide from N(1)-(5-phospho-D-ribosyl)glycinamide (10-formyl THF route): step 1/1. Functionally, trifunctional enzyme required for de novo purine biosynthesis. The sequence is that of Trifunctional purine biosynthetic protein adenosine-3 (ade3) from Drosophila pseudoobscura pseudoobscura (Fruit fly).